Here is a 276-residue protein sequence, read N- to C-terminus: Dermonecrotic toxin LarSicTox-alphaIB2c (276 aa).

Residue His-5 is part of the active site. Mg(2+) contacts are provided by Glu-25 and Asp-27. His-41 (nucleophile) is an active-site residue. 2 disulfides stabilise this stretch: Cys-45-Cys-51 and Cys-47-Cys-190. A Mg(2+)-binding site is contributed by Asp-85. An N-linked (GlcNAc...) asparagine glycan is attached at Asn-253.

This sequence belongs to the arthropod phospholipase D family. Class II subfamily. It depends on Mg(2+) as a cofactor. As to expression, expressed by the venom gland.

It localises to the secreted. The catalysed reaction is an N-(acyl)-sphingosylphosphocholine = an N-(acyl)-sphingosyl-1,3-cyclic phosphate + choline. It catalyses the reaction an N-(acyl)-sphingosylphosphoethanolamine = an N-(acyl)-sphingosyl-1,3-cyclic phosphate + ethanolamine. It carries out the reaction a 1-acyl-sn-glycero-3-phosphocholine = a 1-acyl-sn-glycero-2,3-cyclic phosphate + choline. The enzyme catalyses a 1-acyl-sn-glycero-3-phosphoethanolamine = a 1-acyl-sn-glycero-2,3-cyclic phosphate + ethanolamine. Its function is as follows. Dermonecrotic toxins cleave the phosphodiester linkage between the phosphate and headgroup of certain phospholipids (sphingolipid and lysolipid substrates), forming an alcohol (often choline) and a cyclic phosphate. This toxin acts on sphingomyelin (SM). It may also act on ceramide phosphoethanolamine (CPE), lysophosphatidylcholine (LPC) and lysophosphatidylethanolamine (LPE), but not on lysophosphatidylserine (LPS), and lysophosphatidylglycerol (LPG). It acts by transphosphatidylation, releasing exclusively cyclic phosphate products as second products. Induces dermonecrosis, hemolysis, increased vascular permeability, edema, inflammatory response, and platelet aggregation. This Loxosceles arizonica (Arizona brown spider) protein is Dermonecrotic toxin LarSicTox-alphaIB2c.